Here is a 466-residue protein sequence, read N- to C-terminus: Na(+)/H(+) antiporter NhaA (466 aa).

The next 11 helical transmembrane spans lie at 32 to 52 (VGGV…NVPA), 74 to 94 (LSVQ…VAGI), 111 to 131 (AALP…VYTL), 142 to 162 (GWAV…AVIG), 172 to 192 (FLLT…AVFF), 195 to 215 (DLNF…WLLL), 221 to 241 (GWYV…NSGI), 280 to 300 (GLAV…GGAL), 310 to 330 (LGVV…GTWL), 348 to 368 (VFAV…IGEL), and 379 to 399 (EVKA…TTLL).

It belongs to the NhaA Na(+)/H(+) (TC 2.A.33) antiporter family.

Its subcellular location is the cell membrane. It catalyses the reaction Na(+)(in) + 2 H(+)(out) = Na(+)(out) + 2 H(+)(in). Functionally, na(+)/H(+) antiporter that extrudes sodium in exchange for external protons. This Streptomyces avermitilis (strain ATCC 31267 / DSM 46492 / JCM 5070 / NBRC 14893 / NCIMB 12804 / NRRL 8165 / MA-4680) protein is Na(+)/H(+) antiporter NhaA.